The primary structure comprises 143 residues: MFMGEYQHTIDSKGRMIVPAKFREGLGEQFVLTRGLDQCLFGYPMSEWKLIEEKLKALPLTKKDARAFTRFFFSGATECELDKQGRINIASPLLNYAKLEKECVVIGVSNRIELWSKEIWEQYVEEQEDSFAEIAENMIGFDI.

SpoVT-AbrB domains are found at residues 5–47 (EYQH…PMSE) and 76–119 (ATEC…SKEI).

Belongs to the MraZ family. In terms of assembly, forms oligomers.

The protein localises to the cytoplasm. It localises to the nucleoid. The polypeptide is Transcriptional regulator MraZ (Bacillus licheniformis (strain ATCC 14580 / DSM 13 / JCM 2505 / CCUG 7422 / NBRC 12200 / NCIMB 9375 / NCTC 10341 / NRRL NRS-1264 / Gibson 46)).